The chain runs to 190 residues: Protein FAM210B, mitochondrial (190 aa).

Residues 1–58 constitute a mitochondrion transit peptide; the sequence is MAGLLTLLGPAGRVSTRLRPLAPWLLGTATSCAPPLWALALSHPVPDARLLRTARGDC. The segment covering 56 to 66 has biased composition (basic and acidic residues); sequence GDCLSRQEPNR. The segment at 56–81 is disordered; it reads GDCLSRQEPNRTPEPGGSVTGTEKKL. Positions 78-189 constitute a DUF1279 domain; that stretch reads EKKLSRTQQL…VGLFKPPATK (112 aa). 2 helical membrane-spanning segments follow: residues 97–117 and 148–168; these read VGVS…YTVV and FVVA…ITLV.

Belongs to the FAM210 family. As to expression, expressed in late erythroblast differentiation stages.

It is found in the mitochondrion. The protein resides in the mitochondrion outer membrane. In terms of biological role, plays a role in erythroid differentiation. Involved in cell proliferation and tumor cell growth suppression. Involved in the metabolic reprogramming of cancer cells in a PDK4-dependent manner. This chain is Protein FAM210B, mitochondrial, found in Mus musculus (Mouse).